The primary structure comprises 60 residues: MAEDSVAILIVEDDNDAYPSFGTLPASHAQYGFRLLRGIFLITLVIWTVVWLKLLRDALL.

The chain crosses the membrane as a helical span at residues 33–55 (FRLLRGIFLITLVIWTVVWLKLL).

This sequence belongs to the HHV-5 UL2 protein family.

The protein resides in the host membrane. This is an uncharacterized protein from Human cytomegalovirus (strain AD169) (HHV-5).